A 1119-amino-acid polypeptide reads, in one-letter code: Ubiquitin-associated protein 2 (1119 aa).

The disordered stretch occupies residues 1-26 (MMTSVSSDHCRGAREKPQISAAQSTQ). A compositionally biased stretch (basic and acidic residues) spans 8 to 17 (DHCRGAREKP). The region spanning 48–92 (KNDSDFEAKVKQLMEVTGKNQDECIVALHDCNGDVNKAINILLEG) is the UBA domain. Residues 105–130 (KKKNFAKENSENKENREKKSEKESSR) adopt a coiled-coil conformation. Residues 110-130 (AKENSENKENREKKSEKESSR) show a composition bias toward basic and acidic residues. 7 disordered regions span residues 110-202 (AKEN…YSDS), 385-476 (LGQF…SPST), 622-736 (VHNR…SSHQ), 853-905 (RDGS…VNPA), 937-966 (SAKQHGVNLSTPTPPFQQASGYGQHGYSTG), 982-1020 (GGYAGSSQAPNKSAGSGPGKGVSVSSSTTGLPDMTGSVY), and 1082-1119 (HLPQDAQSGSGQRSQPSSLQPKSQASKPAYGNSPYWTN). Arginine 166 carries the post-translational modification Omega-N-methylarginine. Basic residues predominate over residues 168 to 182 (KRARGRGFGRGRGRG). Low complexity predominate over residues 389–407 (TTTPSTQQNSTSHPTTTTS). Phosphoserine occurs at positions 432, 439, 473, and 630. The segment covering 435–447 (LSQLSQRQQHQSQ) has biased composition (low complexity). Over residues 651–662 (SQQTLDTPKTTG) the composition is skewed to polar residues. Residues 663–678 (PPSALPSVSSLPSTTS) are compositionally biased toward low complexity. Positions 679 to 694 (CTALLPSTSQHTGDLT) are enriched in polar residues. 2 stretches are compositionally biased toward low complexity: residues 695 to 736 (SSPL…SSHQ) and 874 to 900 (SASPAPATTPAQPQQSQSQTHHTAQQP). Over residues 943–957 (VNLSTPTPPFQQASG) the composition is skewed to polar residues. 2 stretches are compositionally biased toward low complexity: residues 1002–1011 (GVSVSSSTTG) and 1088–1102 (QSGSGQRSQPSSLQP).

In terms of assembly, may interact with ANXA2.

It localises to the nucleus. Its subcellular location is the chromosome. It is found in the cytoplasm. Functionally, recruits the ubiquitination machinery to RNA polymerase II for polyubiquitination, removal and degradation, when the transcription-coupled nucleotide excision repair (TC-NER) machinery fails to resolve DNA damage. May promote the degradation of ANXA2. The chain is Ubiquitin-associated protein 2 from Homo sapiens (Human).